The sequence spans 177 residues: uncharacterized protein (177 aa).

Belongs to the flavoredoxin family. FMN serves as cofactor.

This is an uncharacterized protein from Archaeoglobus fulgidus (strain ATCC 49558 / DSM 4304 / JCM 9628 / NBRC 100126 / VC-16).